Here is a 254-residue protein sequence, read N- to C-terminus: UPF0173 protein YddR (254 aa).

This sequence belongs to the UPF0173 family.

This chain is UPF0173 protein YddR (yddR), found in Bacillus subtilis (strain 168).